We begin with the raw amino-acid sequence, 416 residues long: Gamma-glutamyl phosphate reductase (416 aa).

It belongs to the gamma-glutamyl phosphate reductase family.

The protein resides in the cytoplasm. It carries out the reaction L-glutamate 5-semialdehyde + phosphate + NADP(+) = L-glutamyl 5-phosphate + NADPH + H(+). It participates in amino-acid biosynthesis; L-proline biosynthesis; L-glutamate 5-semialdehyde from L-glutamate: step 2/2. Functionally, catalyzes the NADPH-dependent reduction of L-glutamate 5-phosphate into L-glutamate 5-semialdehyde and phosphate. The product spontaneously undergoes cyclization to form 1-pyrroline-5-carboxylate. The polypeptide is Gamma-glutamyl phosphate reductase (Streptococcus mutans serotype c (strain ATCC 700610 / UA159)).